We begin with the raw amino-acid sequence, 740 residues long: MSDSCPVAHDGNTASTSESENPAIPSPTPTGNRPRTNRDWWPNQPDLSVLHAHSSKSNPMGADFDYAQEFAKLDVEALKRDVIALMTASQDWWPADYGHYGGLFVRMSWHAAGTYRIADGRGGGGQGAQRFAPLNSWPDNASLDKARRLLWPVKQKYGKQVSWADLLVFAGNCALESMGFTTFGFGFGREDIWEPEEIYWGPEDTWLGDERYSGDRELSGPLGAVQMGLIYVNPEGPNGQPDPVAAARDIRETFARMAMNDVETAALIAGGHTFGKTHGAGPADLVGPEPEGAPVEQQGLGWKSAFGTGVGKDAITSGLEVVWTPTPTKWDNTFLEILYGYDWELTKSPAGAWQWIPKDGAGAGTIPDPFDSSAGRTPTMLTTDLSLRLDPTYEKITRRWLDHPEEFAEEFAKAWYKLLHRDMGPVTRYLGPWVPEPQLWQDPVPSADDQLIGDADIAILKSRLLDSGLSVSQLVSTAWASAASFRSTDMRGGANGARIRLEPQKNWEVNEPATLSAVLQTLERVQQEFNQAGGAKVSLADLIVLGGTAAVEQAAKNAGQDITVSFTPGRTDATQEQTDVDSFEVLEPRADGFRNYLKGGEKIPAEILLVDRAYMLSLTPPEVTVLVGGLRALNANFGKTGHGVFTDRPETLTNDFFVNLLDMGTEWKPSKTEENVYDGVDRATGDPKYTATAVDLVFGSNSQLRALSEVYASEDAKQKFAEDFAAAWTKVMDLDRFDVN.

The interval 1–44 (MSDSCPVAHDGNTASTSESENPAIPSPTPTGNRPRTNRDWWPNQ) is disordered. The segment at residues 109–231 (WHAAGTYRIA…LGAVQMGLIY (123 aa)) is a cross-link (tryptophyl-tyrosyl-methioninium (Trp-Tyr) (with M-257)). His-110 functions as the Proton acceptor in the catalytic mechanism. A cross-link (tryptophyl-tyrosyl-methioninium (Tyr-Met) (with W-109)) is located at residues 231-257 (YVNPEGPNGQPDPVAAARDIRETFARM). Heme b is bound at residue His-272.

The protein belongs to the peroxidase family. Peroxidase/catalase subfamily. In terms of assembly, homodimer or homotetramer. Requires heme b as cofactor. In terms of processing, formation of the three residue Trp-Tyr-Met cross-link is important for the catalase, but not the peroxidase activity of the enzyme.

The enzyme catalyses H2O2 + AH2 = A + 2 H2O. The catalysed reaction is 2 H2O2 = O2 + 2 H2O. Bifunctional enzyme with both catalase and broad-spectrum peroxidase activity. In Rhodococcus erythropolis (strain PR4 / NBRC 100887), this protein is Catalase-peroxidase.